We begin with the raw amino-acid sequence, 284 residues long: Nucleoid occlusion protein (284 aa).

A DNA-binding region (H-T-H motif) is located at residues 143 to 162 (EALAQRVGKSQSAIANKMRL).

This sequence belongs to the ParB family.

Its subcellular location is the cytoplasm. It is found in the nucleoid. In terms of biological role, effects nucleoid occlusion by binding relatively nonspecifically to DNA and preventing the assembly of the division machinery in the vicinity of the nucleoid, especially under conditions that disturb the cell cycle. It helps to coordinate cell division and chromosome segregation by preventing the formation of the Z ring through the nucleoid, which would cause chromosome breakage. The chain is Nucleoid occlusion protein from Listeria monocytogenes serovar 1/2a (strain ATCC BAA-679 / EGD-e).